The sequence spans 135 residues: MEGKIMNIKHKIPILLLVLYIALGVFIQYNGISEFKSLPSPIYGGDYYYQMGVIWHIRDGGNPLESSSMIGGMPGYLPLYAYLCAKFCDLLNLDTMKGILYFSVVLFIMTSVIWFYLFRVLFKDDWVALIEVVLA.

3 consecutive transmembrane segments (helical) span residues 12 to 32 (IPILLLVLYIALGVFIQYNGI), 68 to 88 (SMIGGMPGYLPLYAYLCAKFC), and 98 to 118 (GILYFSVVLFIMTSVIWFYLF).

The protein localises to the cell membrane. This is an uncharacterized protein from Methanocaldococcus jannaschii (strain ATCC 43067 / DSM 2661 / JAL-1 / JCM 10045 / NBRC 100440) (Methanococcus jannaschii).